Here is a 385-residue protein sequence, read N- to C-terminus: 4-hydroxy-3-methylbut-2-en-1-yl diphosphate synthase (flavodoxin) 1 (385 aa).

[4Fe-4S] cluster-binding residues include Cys280, Cys283, Cys315, and Glu322.

Belongs to the IspG family. Requires [4Fe-4S] cluster as cofactor.

It carries out the reaction (2E)-4-hydroxy-3-methylbut-2-enyl diphosphate + oxidized [flavodoxin] + H2O + 2 H(+) = 2-C-methyl-D-erythritol 2,4-cyclic diphosphate + reduced [flavodoxin]. It functions in the pathway isoprenoid biosynthesis; isopentenyl diphosphate biosynthesis via DXP pathway; isopentenyl diphosphate from 1-deoxy-D-xylulose 5-phosphate: step 5/6. Functionally, converts 2C-methyl-D-erythritol 2,4-cyclodiphosphate (ME-2,4cPP) into 1-hydroxy-2-methyl-2-(E)-butenyl 4-diphosphate. The chain is 4-hydroxy-3-methylbut-2-en-1-yl diphosphate synthase (flavodoxin) 1 from Streptomyces avermitilis (strain ATCC 31267 / DSM 46492 / JCM 5070 / NBRC 14893 / NCIMB 12804 / NRRL 8165 / MA-4680).